Reading from the N-terminus, the 671-residue chain is RNA polymerase sigma factor RpoD (671 aa).

Disordered stretches follow at residues 1–45 (MKKK…SKIK) and 229–260 (DDDE…VSEK). The segment covering 251–260 (EERKKVVSEK) has biased composition (basic and acidic residues). Residues 436–506 (MAKSNLRLVV…SRAIADQART (71 aa)) are sigma-70 factor domain-2. The Interaction with polymerase core subunit RpoC signature appears at 460 to 463 (DLIQ). The sigma-70 factor domain-3 stretch occupies residues 515–591 (DTINRINKVM…DKNIVSSIDH (77 aa)). The segment at 604–658 (VLDQLNEREKAVIRMRFGLLDDESDRTLEEIGKELNVTRERVRQIESSAIKKLRS) is sigma-70 factor domain-4. The segment at residues 631–650 (LEEIGKELNVTRERVRQIES) is a DNA-binding region (H-T-H motif).

Belongs to the sigma-70 factor family. RpoD/SigA subfamily. Interacts transiently with the RNA polymerase catalytic core.

It is found in the cytoplasm. In terms of biological role, sigma factors are initiation factors that promote the attachment of RNA polymerase to specific initiation sites and are then released. This sigma factor is the primary sigma factor during exponential growth. This is RNA polymerase sigma factor RpoD from Helicobacter pylori (strain ATCC 700392 / 26695) (Campylobacter pylori).